Consider the following 348-residue polypeptide: Heat-inducible transcription repressor HrcA (348 aa).

It belongs to the HrcA family.

Functionally, negative regulator of class I heat shock genes (grpE-dnaK-dnaJ and groELS operons). Prevents heat-shock induction of these operons. This Lacticaseibacillus casei (strain BL23) (Lactobacillus casei) protein is Heat-inducible transcription repressor HrcA.